The primary structure comprises 156 residues: Small ribosomal subunit protein uS7 (156 aa).

Belongs to the universal ribosomal protein uS7 family. Part of the 30S ribosomal subunit. Contacts proteins S9 and S11.

In terms of biological role, one of the primary rRNA binding proteins, it binds directly to 16S rRNA where it nucleates assembly of the head domain of the 30S subunit. Is located at the subunit interface close to the decoding center, probably blocks exit of the E-site tRNA. This Clostridium botulinum (strain Alaska E43 / Type E3) protein is Small ribosomal subunit protein uS7.